A 510-amino-acid polypeptide reads, in one-letter code: Bifunctional purine biosynthesis protein PurH (510 aa).

An MGS-like domain is found at 1-145 (MSKRALISVS…KNFEDVLVVT (145 aa)).

It belongs to the PurH family.

It carries out the reaction (6R)-10-formyltetrahydrofolate + 5-amino-1-(5-phospho-beta-D-ribosyl)imidazole-4-carboxamide = 5-formamido-1-(5-phospho-D-ribosyl)imidazole-4-carboxamide + (6S)-5,6,7,8-tetrahydrofolate. The enzyme catalyses IMP + H2O = 5-formamido-1-(5-phospho-D-ribosyl)imidazole-4-carboxamide. Its pathway is purine metabolism; IMP biosynthesis via de novo pathway; 5-formamido-1-(5-phospho-D-ribosyl)imidazole-4-carboxamide from 5-amino-1-(5-phospho-D-ribosyl)imidazole-4-carboxamide (10-formyl THF route): step 1/1. It functions in the pathway purine metabolism; IMP biosynthesis via de novo pathway; IMP from 5-formamido-1-(5-phospho-D-ribosyl)imidazole-4-carboxamide: step 1/1. The chain is Bifunctional purine biosynthesis protein PurH from Oceanobacillus iheyensis (strain DSM 14371 / CIP 107618 / JCM 11309 / KCTC 3954 / HTE831).